The following is a 273-amino-acid chain: uncharacterized protein (273 aa).

Basic residues predominate over residues M1–P10. 2 disordered regions span residues M1–N32 and E50–P124. 3 stretches are compositionally biased toward polar residues: residues K12–A24, Q55–L64, and P92–P124. A Phosphoserine modification is found at S123.

It localises to the nucleus. Its subcellular location is the cytoplasm. The protein localises to the cytoskeleton. It is found in the spindle. This is an uncharacterized protein from Schizosaccharomyces pombe (strain 972 / ATCC 24843) (Fission yeast).